The following is a 156-amino-acid chain: Transcription elongation factor GreA 1 (156 aa).

The stretch at 43 to 74 forms a coiled coil; it reads RSENAEYSSAKRDLGRLESRLRYLNKQLQYAQ.

The protein belongs to the GreA/GreB family.

Necessary for efficient RNA polymerase transcription elongation past template-encoded arresting sites. The arresting sites in DNA have the property of trapping a certain fraction of elongating RNA polymerases that pass through, resulting in locked ternary complexes. Cleavage of the nascent transcript by cleavage factors such as GreA or GreB allows the resumption of elongation from the new 3'terminus. GreA releases sequences of 2 to 3 nucleotides. The sequence is that of Transcription elongation factor GreA 1 from Lactiplantibacillus plantarum (strain ATCC BAA-793 / NCIMB 8826 / WCFS1) (Lactobacillus plantarum).